We begin with the raw amino-acid sequence, 244 residues long: Inactive chemokine-binding protein (244 aa).

The disordered stretch occupies residues Met-1–Pro-79. The span at Gln-37 to Ile-53 shows a compositional bias: polar residues. Positions Thr-54 to Asp-77 are enriched in acidic residues.

Belongs to the orthopoxvirus OPG001 family.

Its subcellular location is the host cytoplasm. In terms of biological role, the protein is truncated in this vaccinal strain and presumably inactive, because the lack of signal peptide prevents the protein of being secreted. In the wild-type viruses inhibits host immune defense by binding to host chemokines. Binds host CC chemokines (beta chemokines) such as RANTES with high affinity, but not CXC or C chemokines (alpha and gamma chemokines). The sequence is that of Inactive chemokine-binding protein (OPG001) from Vaccinia virus (strain Western Reserve) (VACV).